We begin with the raw amino-acid sequence, 279 residues long: MSVQIRKRGRPRGRAGGLGAEDSGGIRALDRALDILDLIAVSSGLTLTEIAQRLDMAPSTVHRVLVTLAARGVAESDSQTQAWHVGPTAFRHGSAFMRRSGLVERARPLLRRLMEVTGETANLGILNGDAVLFLSQAETHETIRAFFPPGTRSALHASGIGKALLAHARPLDLKRMLREMRLERFTDMTLTDPAALVEDLVQIRARGYALDNEERTPGMRCIAAPIFDLAGEAAAGISVSGPTLRMSDARLSAMSDAVIEAARELSFGMAPRKDAGERA.

A compositionally biased stretch (basic residues) spans 1 to 13 (MSVQIRKRGRPRG). The interval 1–21 (MSVQIRKRGRPRGRAGGLGAE) is disordered. An HTH iclR-type domain is found at 26–87 (IRALDRALDI…SQTQAWHVGP (62 aa)). The segment at residues 47–66 (LTEIAQRLDMAPSTVHRVLV) is a DNA-binding region (H-T-H motif). The 170-residue stretch at 102 to 271 (LVERARPLLR…ARELSFGMAP (170 aa)) folds into the IclR-ED domain.

Functionally, transcriptional regulator of the bhc gene cluster involved in glycolate and glyoxylate assimilation via the beta-hydroxyaspartate cycle (BHAC). Glyoxylate negatively affects the interaction of BhcR with the promoter region of the bhc gene cluster. This Paracoccus denitrificans (strain Pd 1222) protein is HTH-type transcriptional regulator BhcR.